We begin with the raw amino-acid sequence, 253 residues long: Imidazole glycerol phosphate synthase subunit HisF (253 aa).

Catalysis depends on residues aspartate 11 and aspartate 130.

The protein belongs to the HisA/HisF family. As to quaternary structure, heterodimer of HisH and HisF.

The protein resides in the cytoplasm. It carries out the reaction 5-[(5-phospho-1-deoxy-D-ribulos-1-ylimino)methylamino]-1-(5-phospho-beta-D-ribosyl)imidazole-4-carboxamide + L-glutamine = D-erythro-1-(imidazol-4-yl)glycerol 3-phosphate + 5-amino-1-(5-phospho-beta-D-ribosyl)imidazole-4-carboxamide + L-glutamate + H(+). Its pathway is amino-acid biosynthesis; L-histidine biosynthesis; L-histidine from 5-phospho-alpha-D-ribose 1-diphosphate: step 5/9. Its function is as follows. IGPS catalyzes the conversion of PRFAR and glutamine to IGP, AICAR and glutamate. The HisF subunit catalyzes the cyclization activity that produces IGP and AICAR from PRFAR using the ammonia provided by the HisH subunit. This Opitutus terrae (strain DSM 11246 / JCM 15787 / PB90-1) protein is Imidazole glycerol phosphate synthase subunit HisF.